Consider the following 490-residue polypeptide: 4-hydroxybutyryl-CoA dehydratase/vinylacetyl-CoA-Delta-isomerase (490 aa).

Residues C99 and C103 each contribute to the [4Fe-4S] cluster site. FAD is bound by residues 149 to 156 (MTDPKGDR) and 188 to 190 (HQT). The [4Fe-4S] cluster site is built by H292 and C299. FAD is bound by residues H325 and 386-390 (DIAGG).

Homotetramer. FAD serves as cofactor. It depends on [4Fe-4S] cluster as a cofactor.

The catalysed reaction is 4-hydroxybutanoyl-CoA = (2E)-butenoyl-CoA + H2O. It carries out the reaction vinylacetyl-CoA = (2E)-butenoyl-CoA. Its function is as follows. Catalyzes the reversible conversion of 4-hydroxybutyryl-CoA to crotonyl-CoA. The mechanism of the reaction seems to go through three steps: (1) the FAD-dependent oxidation of 4-hydroxybutyryl-CoA to 4-hydroxycrotonyl-CoA; (2) the hydroxyl group is substituted by a hydride derived from the now reduced FAD in an SN2' reaction leading to vinylacetyl-CoA; (3) isomerization to yield crotonyl-CoA. In Clostridium aminobutyricum, this protein is 4-hydroxybutyryl-CoA dehydratase/vinylacetyl-CoA-Delta-isomerase (abfD).